The following is a 132-amino-acid chain: Small ribosomal subunit protein uS8 (132 aa).

The protein belongs to the universal ribosomal protein uS8 family. Part of the 30S ribosomal subunit. Contacts proteins S5 and S12.

Its function is as follows. One of the primary rRNA binding proteins, it binds directly to 16S rRNA central domain where it helps coordinate assembly of the platform of the 30S subunit. The sequence is that of Small ribosomal subunit protein uS8 from Bartonella bacilliformis (strain ATCC 35685 / KC583 / Herrer 020/F12,63).